The sequence spans 231 residues: DNA mismatch repair protein MutH (231 aa).

This sequence belongs to the MutH family.

The protein localises to the cytoplasm. Its function is as follows. Sequence-specific endonuclease that cleaves unmethylated GATC sequences. It is involved in DNA mismatch repair. In Salmonella paratyphi A (strain ATCC 9150 / SARB42), this protein is DNA mismatch repair protein MutH.